We begin with the raw amino-acid sequence, 80 residues long: Putative ankyrin repeat protein RC0877 (80 aa).

One copy of the ANK repeat lies at 6 to 46 (SGGIPLHAVAKNVRCTSKDIKDYEIYKLLVSYGADINARVE).

This is Putative ankyrin repeat protein RC0877 from Rickettsia conorii (strain ATCC VR-613 / Malish 7).